The primary structure comprises 318 residues: Acetyl-coenzyme A carboxylase carboxyl transferase subunit alpha (318 aa).

One can recognise a CoA carboxyltransferase C-terminal domain in the interval 43 to 293 (RSQTALRDLY…GDGIAAALKS (251 aa)).

The protein belongs to the AccA family. As to quaternary structure, acetyl-CoA carboxylase is a heterohexamer composed of biotin carboxyl carrier protein (AccB), biotin carboxylase (AccC) and two subunits each of ACCase subunit alpha (AccA) and ACCase subunit beta (AccD).

It localises to the cytoplasm. It carries out the reaction N(6)-carboxybiotinyl-L-lysyl-[protein] + acetyl-CoA = N(6)-biotinyl-L-lysyl-[protein] + malonyl-CoA. The protein operates within lipid metabolism; malonyl-CoA biosynthesis; malonyl-CoA from acetyl-CoA: step 1/1. In terms of biological role, component of the acetyl coenzyme A carboxylase (ACC) complex. First, biotin carboxylase catalyzes the carboxylation of biotin on its carrier protein (BCCP) and then the CO(2) group is transferred by the carboxyltransferase to acetyl-CoA to form malonyl-CoA. The sequence is that of Acetyl-coenzyme A carboxylase carboxyl transferase subunit alpha from Bartonella bacilliformis (strain ATCC 35685 / KC583 / Herrer 020/F12,63).